The sequence spans 363 residues: G-protein coupled receptor 6 (363 aa).

The Extracellular segment spans residues 1–75 (MNASAAALNE…SGLLLSAVNP (75 aa)). N-linked (GlcNAc...) asparagine glycosylation is found at asparagine 2 and asparagine 9. Residues 28–51 (AGTPDTSEWGPPAASAALGGGGGP) are disordered. N-linked (GlcNAc...) asparagine glycosylation occurs at asparagine 52. A helical membrane pass occupies residues 76–95 (WDVLLCVSGTVIAGENALVV). Residues 96 to 107 (ALIASTPALRTP) are Cytoplasmic-facing. The chain crosses the membrane as a helical span at residues 108–131 (MFVLVGSLATADLLAGCGLILHFV). The Extracellular portion of the chain corresponds to 132–143 (FQYVVPSETVSL). The helical transmembrane segment at 144–165 (LMVGFLVASFAASVSSLLAITV) threads the bilayer. Residues 166–186 (DRYLSLYNALTYYSRRTLLGV) lie on the Cytoplasmic side of the membrane. Residues 187–206 (HLLLAATWTVSLGLGLLPVL) form a helical membrane-spanning segment. Residues 207–231 (GWNCLADRASCSVVRPLTRSHVALL) lie on the Extracellular side of the membrane. A helical membrane pass occupies residues 232–250 (STSFFVVFGIMLHLYVRIC). Residues 251 to 278 (QVVWRHAHQIALQQHCLAPPHLAATRKG) lie on the Cytoplasmic side of the membrane. A helical transmembrane segment spans residues 279-305 (VGTLAVVLGTFGASWLPFAIYCVVGSQ). Over 306 to 310 (EDPAI) the chain is Extracellular. The helical transmembrane segment at 311 to 332 (YTYATLLPATYNSMINPIIYAF) threads the bilayer. Topologically, residues 333–363 (RNQEIQRALWLLFCGCFQSKVPFRSRSPSEV) are cytoplasmic. Residue cysteine 346 is the site of S-palmitoyl cysteine attachment. A phosphoserine mark is found at serine 357, serine 359, and serine 361.

The protein belongs to the G-protein coupled receptor 1 family. Expressed in the brain, with a prominent distribution in striatum.

The protein resides in the cell membrane. In terms of biological role, orphan receptor with constitutive G(s) signaling activity that activate cyclic AMP. Promotes neurite outgrowth and blocks myelin inhibition in neurons. The polypeptide is G-protein coupled receptor 6 (Gpr6) (Rattus norvegicus (Rat)).